The primary structure comprises 486 residues: NGFI-A-binding protein 1 (486 aa).

The tract at residues 4–82 (ALPRTLGELQ…RDWVTNPGLF (79 aa)) is NCD1. Glycyl lysine isopeptide (Lys-Gly) (interchain with G-Cter in SUMO2) cross-links involve residues lysine 126, lysine 129, and lysine 143. The segment at 160-187 (WQGHHATESEHSLSPADLGSPASPKESS) is disordered. Phosphoserine is present on residues serine 171 and serine 182. A Glycyl lysine isopeptide (Lys-Gly) (interchain with G-Cter in SUMO2) cross-link involves residue lysine 211. Residues 220 to 309 (LLKNNKKLAK…ARQVSREVTY (90 aa)) are NCD2. The tract at residues 306 to 337 (EVTYKYTYRTTRLKCGERDELSPKRIKIEDGF) is necessary for nuclear localization. A Phosphoserine modification is found at serine 327. Lysine 332 is covalently cross-linked (Glycyl lysine isopeptide (Lys-Gly) (interchain with G-Cter in SUMO1); alternate). A Glycyl lysine isopeptide (Lys-Gly) (interchain with G-Cter in SUMO2); alternate cross-link involves residue lysine 332. Glycyl lysine isopeptide (Lys-Gly) (interchain with G-Cter in SUMO2) cross-links involve residues lysine 354, lysine 368, and lysine 372. A disordered region spans residues 398–438 (RQSSGEQSPDGGLPSDSSDGQGERPLNLRIPSVQNRQPHHF). Low complexity predominate over residues 404 to 417 (QSPDGGLPSDSSDG). At serine 405 the chain carries Phosphoserine. Glycyl lysine isopeptide (Lys-Gly) (interchain with G-Cter in SUMO2) cross-links involve residues lysine 453, lysine 464, and lysine 476. Lysine 479 is covalently cross-linked (Glycyl lysine isopeptide (Lys-Gly) (interchain with G-Cter in SUMO1); alternate). Lysine 479 is covalently cross-linked (Glycyl lysine isopeptide (Lys-Gly) (interchain with G-Cter in SUMO2); alternate).

This sequence belongs to the NAB family. As to quaternary structure, homomultimers may associate with EGR1 bound to DNA. Widely expressed in adult. In day 16 embryo highest levels in forebrain, thymus, salivary gland and cartilage.

The protein resides in the nucleus. Acts as a transcriptional repressor for zinc finger transcription factors EGR1 and EGR2. This chain is NGFI-A-binding protein 1 (Nab1), found in Mus musculus (Mouse).